Consider the following 509-residue polypeptide: Transcription factor SOX-9 (509 aa).

Disordered stretches follow at residues M1–E66 and R160–R271. Residues S27–S41 are compositionally biased toward low complexity. A compositionally biased stretch (polar residues) spans D42 to T52. Basic and acidic residues-rich tracts occupy residues G56–E66 and R160–Y174. The tract at residues E63–P103 is dimerization (DIM). The tract at residues E63 to P103 is PQA. S64 is subject to Phosphoserine. Positions V105–K173 form a DNA-binding region, HMG box. The residue at position 211 (S211) is a Phosphoserine. A transactivation domain (TAM) region spans residues P224–P307. 2 short sequence motifs (9aaTAD) span residues I275 to S284 and D290 to L298. Disordered stretches follow at residues W335–P415 and Y420–Q439. Residues A341–P359 show a composition bias toward pro residues. Over residues A360–Q369 the composition is skewed to low complexity. Over residues H380–P415 the composition is skewed to polar residues. The transactivation domain (TAC) stretch occupies residues R394–P509. A Glycyl lysine isopeptide (Lys-Gly) (interchain with G-Cter in ubiquitin) cross-link involves residue K398. The 9aaTAD 3 motif lies at S460–Y468. Positions P479 to P509 are disordered. Residues G485 to P509 are compositionally biased toward polar residues.

Homodimer; homodimerization is required for activity. Interacts (via C-terminus) with ZNF219; forming a complex that binds to the COL2A1 promoter and activates COL2A1 expression. Interacts with DDRGK1. Interacts with EP300/p300. Interacts with beta-catenin (CTNNB1); inhibiting CTNNB1 activity by competing with the binding sites of TCF/LEF within CTNNB1. Post-translationally, acetylated; acetylation impairs nuclear localization and ability to transactivate expression of target genes. Deacetylated by SIRT1. Phosphorylation at Ser-64 and Ser-211 by PKA increases transcriptional activity and may help delay chondrocyte maturation downstream of PTHLH/PTHrP signaling. Phosphorylation at either Ser-64 or Ser-211 is required for sumoylation, but phosphorylation is not dependent on sumoylation. Phosphorylated on tyrosine residues; tyrosine dephosphorylation by PTPN11/SHP2 blocks SOX9 phosphorylation by PKA and subsequent SUMOylation. In terms of processing, sumoylated; phosphorylation at either Ser-64 or Ser-211 is required for sumoylation. Sumoylation is induced by BMP signaling pathway. Post-translationally, ubiquitinated; ubiquitination leads to proteasomal degradation and is negatively regulated by DDRGK1.

The protein resides in the nucleus. Transcription factor that plays a key role in chondrocytes differentiation and skeletal development. Specifically binds the 5'-ACAAAG-3' DNA motif present in enhancers and super-enhancers and promotes expression of genes important for chondrogenesis, including cartilage matrix protein-coding genes COL2A1, COL4A2, COL9A1, COL11A2 and ACAN, SOX5 and SOX6. Also binds to some promoter regions. Plays a central role in successive steps of chondrocyte differentiation. Absolutely required for precartilaginous condensation, the first step in chondrogenesis during which skeletal progenitors differentiate into prechondrocytes. Together with SOX5 and SOX6, required for overt chondrogenesis when condensed prechondrocytes differentiate into early stage chondrocytes, the second step in chondrogenesis. Later, required to direct hypertrophic maturation and block osteoblast differentiation of growth plate chondrocytes: maintains chondrocyte columnar proliferation, delays prehypertrophy and then prevents osteoblastic differentiation of chondrocytes by lowering beta-catenin (CTNNB1) signaling and RUNX2 expression. Also required for chondrocyte hypertrophy, both indirectly, by keeping the lineage fate of chondrocytes, and directly, by remaining present in upper hypertrophic cells and transactivating COL10A1 along with MEF2C. Low lipid levels are the main nutritional determinant for chondrogenic commitment of skeletal progenitor cells: when lipids levels are low, FOXO (FOXO1 and FOXO3) transcription factors promote expression of SOX9, which induces chondrogenic commitment and suppresses fatty acid oxidation. Mechanistically, helps, but is not required, to remove epigenetic signatures of transcriptional repression and deposit active promoter and enhancer marks at chondrocyte-specific genes. Acts in cooperation with the Hedgehog pathway-dependent GLI (GLI1 and GLI3) transcription factors. In addition to cartilage development, also acts as a regulator of proliferation and differentiation in epithelial stem/progenitor cells: involved in the lung epithelium during branching morphogenesis, by balancing proliferation and differentiation and regulating the extracellular matrix. Controls epithelial branching during kidney development. This chain is Transcription factor SOX-9 (SOX9), found in Sus scrofa (Pig).